We begin with the raw amino-acid sequence, 117 residues long: Nascent polypeptide-associated complex protein (117 aa).

The region spanning 9 to 77 is the NAC-A/B domain; it reads PKQLKQMQRA…ARECDLEAEV (69 aa).

The protein belongs to the NAC-alpha family. In terms of assembly, homodimer. Interacts with the ribosome. Binds ribosomal RNA.

Its function is as follows. Contacts the emerging nascent chain on the ribosome. The chain is Nascent polypeptide-associated complex protein from Methanothermobacter marburgensis (strain ATCC BAA-927 / DSM 2133 / JCM 14651 / NBRC 100331 / OCM 82 / Marburg) (Methanobacterium thermoautotrophicum).